The sequence spans 145 residues: Nickel-responsive regulator (145 aa).

Residues histidine 77, histidine 88, histidine 90, and cysteine 96 each contribute to the Ni(2+) site.

Belongs to the transcriptional regulatory CopG/NikR family. As to quaternary structure, homotetramer. It depends on Ni(2+) as a cofactor.

In terms of biological role, transcriptional repressor of the nikABCDE operon. Is active in the presence of excessive concentrations of intracellular nickel. The chain is Nickel-responsive regulator from Edwardsiella ictaluri (strain 93-146).